The following is a 725-amino-acid chain: FYVE, RhoGEF and PH domain-containing protein 3 (725 aa).

The tract at residues 1–151 is disordered; that stretch reads MESGRGSSTP…KADKDAGLAQ (151 aa). The span at 124-136 shows a compositional bias: acidic residues; the sequence is EEADSDVGEEPDS. At serine 128 the chain carries Phosphoserine. A DH domain is found at 157-341; sequence KLLHIAQELL…STAANHSNAA (185 aa). Residues 370 to 469 enclose the PH 1 domain; it reads ELIKEGQIQK…WIQIIQATIE (100 aa). Residues 487-532 form a disordered region; that stretch reads QDEDPSLSPDMPITSTSPVEPVVTTEGSSGAAGLEPRKLSSKTRRD. Positions 500–512 are enriched in low complexity; it reads TSTSPVEPVVTTE. Positions 521–532 are enriched in basic and acidic residues; sequence EPRKLSSKTRRD. An FYVE-type zinc finger spans residues 532-588; sequence DKEKQSCKSCGETFNSITKRRHHCKLCGAVICGKCSEFKAENSRQSRVCRDCFLTQP. Residues cysteine 538, cysteine 541, cysteine 555, cysteine 558, cysteine 563, cysteine 566, cysteine 580, and cysteine 583 each coordinate Zn(2+). Residues 604 to 703 enclose the PH 2 domain; it reads PSLLCGPLRL…WLETLSTAAH (100 aa). Residues 703 to 725 are disordered; it reads HGDTAQDSPGALQLQVPMGAAAP.

The protein resides in the cytoplasm. The protein localises to the cytoskeleton. In terms of biological role, promotes the formation of filopodia. May activate CDC42, a member of the Ras-like family of Rho- and Rac proteins, by exchanging bound GDP for free GTP. Plays a role in regulating the actin cytoskeleton and cell shape. This is FYVE, RhoGEF and PH domain-containing protein 3 (FGD3) from Homo sapiens (Human).